The primary structure comprises 495 residues: MGRRRQRVDPAAGARAGALPEAIAALSRSLPSGPSPEIFRRAKFDRPEATSALWQLLFRVLSPLPAGNALASLALEVQARLVKSALCSQGYPRLALAQLPEDGSQGSRELLLALSWLLARGPVPEQMLAQARVPLGDEMTVCQCEALASPGPPAPHMEAEGPVDVRHVQWLMGKLRFRWRQLVSSQQEQCALLSKIHLYTRGCHSDQSLSHLSVTEAEMLRDPEGGQQVSGAGAAQNLDLAYPKCLHSFCTPGMGPRTFWNDLWLVCEQPGLLPGDWAAPLDPGGASACSLLSPFRALLRTLERENQRLEAVLAWRRSELVFWRWMDTVLGTCAPEVPAAASQPTFLPWVPERGGGELDLVVRELQALEEELREAAERRRAAWEAKAGGCGRGPEWSAARRASREAVEKELGALQQCWERDGGPAQPHGPHRLVRREDGAAGDRDLRAAVVIRTLRSQEACLEAVLRRLQGQCRQELARLVGARPGLIWIPPPGR.

Positions 355–387 (GGELDLVVRELQALEEELREAAERRRAAWEAKA) form a coiled coil. A disordered region spans residues 417–440 (CWERDGGPAQPHGPHRLVRREDGA). Residues 452 to 480 (IRTLRSQEACLEAVLRRLQGQCRQELARL) adopt a coiled-coil conformation.

Interacts with TEDC2. Found in a complex with TEDC1, TEDC2, TUBE1 and TUBD1.

The protein resides in the cell projection. Its subcellular location is the cilium. The protein localises to the cytoplasm. It localises to the cytoskeleton. It is found in the microtubule organizing center. The protein resides in the centrosome. Its subcellular location is the centriole. Acts as a positive regulator of ciliary hedgehog signaling. Required for centriole stability. May play a role in counteracting perturbation of actin filaments, such as after treatment with the actin depolymerizing microbial metabolite Chivosazole F. The chain is Tubulin epsilon and delta complex protein 1 from Homo sapiens (Human).